The following is a 148-amino-acid chain: UPF0260 protein KPN78578_22800 (148 aa).

The protein belongs to the UPF0260 family.

The chain is UPF0260 protein KPN78578_22800 from Klebsiella pneumoniae subsp. pneumoniae (strain ATCC 700721 / MGH 78578).